The sequence spans 588 residues: Intracellular maltogenic amylase (588 aa).

The Ca(2+) site is built by asparagine 149, serine 155, glycine 174, and aspartate 176. Substrate contacts are provided by histidine 249 and arginine 325. The active-site Nucleophile is the aspartate 327. The active-site Proton donor is the glutamate 356. Residues 422–423 (HD), aspartate 467, and arginine 471 each bind substrate.

The protein belongs to the glycosyl hydrolase 13 family. BbmA subfamily. In terms of assembly, monomer or homodimer; in equilibrium. Requires Ca(2+) as cofactor.

It localises to the cytoplasm. Functionally, hydrolyzes beta-cyclodextrin to maltose and glucose, soluble starch to maltose and glucose, and pullulan to panose with trace amounts of maltose and glucose. It is also able to hydrolyze acarbose. Can also exhibit a transglycosylation activity transferring glucose or maltose to another moiety of sugars by forming alpha-(1,6)- and alpha-(1,3)-glycosidic linkages upon the hydrolysis of substrate at concentrations of 5% or higher. In Bacillus subtilis (strain 168), this protein is Intracellular maltogenic amylase (bbmA).